We begin with the raw amino-acid sequence, 227 residues long: Urease accessory protein UreF (227 aa).

This sequence belongs to the UreF family. As to quaternary structure, ureD, UreF and UreG form a complex that acts as a GTP-hydrolysis-dependent molecular chaperone, activating the urease apoprotein by helping to assemble the nickel containing metallocenter of UreC. The UreE protein probably delivers the nickel.

It is found in the cytoplasm. Functionally, required for maturation of urease via the functional incorporation of the urease nickel metallocenter. The polypeptide is Urease accessory protein UreF (Bacillus sp. (strain TB-90)).